We begin with the raw amino-acid sequence, 166 residues long: NADPH-dependent 7-cyano-7-deazaguanine reductase (166 aa).

Residue cysteine 57 is the Thioimide intermediate of the active site. Catalysis depends on aspartate 64, which acts as the Proton donor. Residues 79–81 (VES) and 98–99 (HE) each bind substrate.

It belongs to the GTP cyclohydrolase I family. QueF type 1 subfamily.

The protein localises to the cytoplasm. It catalyses the reaction 7-aminomethyl-7-carbaguanine + 2 NADP(+) = 7-cyano-7-deazaguanine + 2 NADPH + 3 H(+). The protein operates within tRNA modification; tRNA-queuosine biosynthesis. Catalyzes the NADPH-dependent reduction of 7-cyano-7-deazaguanine (preQ0) to 7-aminomethyl-7-deazaguanine (preQ1). The polypeptide is NADPH-dependent 7-cyano-7-deazaguanine reductase (Staphylococcus aureus (strain MRSA252)).